Here is a 468-residue protein sequence, read N- to C-terminus: MTIQIYNTLTRQKEIFKPLEEGKVKMYVCGPTVYNYIHIGNARPAIVFDTVRRYLEYRGFDVDYVLNFTDVDDKIIKTAKDVGEEVPVLADRFVNAYLEDVGALGVKKATKNPRVMDTMDDIIAFISALIEKGYAYEADGDVYFKPRSFDTYGKLSHQSIDELRSGARIQVGEKKEDPLDFALWKQAKDDEIAWKSPWGEGRPGWHIECSAMVKKHLGDTIDIHAGGQDLTFPHHENEIAQSEAMNGETFANYWMHNGYINIDNEKMSKSLGNFVLARDLIQAHDPRVLRFFMLSVHYRNPINFTEALLESAKTSLERIQTAYHNLSHRRDSSLNLTNDDAKWLQLVSAAMSKFEQDMDDDFNTANAISVLFDLSKEANVYLQENQTSTEVIDAFQDAISQILTVLGINILEDEETLLDETIEALIKERNEARKNRNFARADEIRDMLKEKGIVLEDTPQGVRWKRGK.

Zn(2+) is bound at residue Cys29. The short motif at 31 to 41 is the 'HIGH' region element; it reads PTVYNYIHIGN. Residues Cys209, His234, and Glu238 each contribute to the Zn(2+) site. The 'KMSKS' region motif lies at 266-270; the sequence is KMSKS. Position 269 (Lys269) interacts with ATP. Phosphoserine is present on Ser270.

The protein belongs to the class-I aminoacyl-tRNA synthetase family. As to quaternary structure, monomer. Requires Zn(2+) as cofactor.

It is found in the cytoplasm. The enzyme catalyses tRNA(Cys) + L-cysteine + ATP = L-cysteinyl-tRNA(Cys) + AMP + diphosphate. The protein is Cysteine--tRNA ligase of Oceanobacillus iheyensis (strain DSM 14371 / CIP 107618 / JCM 11309 / KCTC 3954 / HTE831).